The primary structure comprises 98 residues: Large ribosomal subunit protein uL23 (98 aa).

Belongs to the universal ribosomal protein uL23 family. Part of the 50S ribosomal subunit. Contacts protein L29, and trigger factor when it is bound to the ribosome.

One of the early assembly proteins it binds 23S rRNA. One of the proteins that surrounds the polypeptide exit tunnel on the outside of the ribosome. Forms the main docking site for trigger factor binding to the ribosome. This Methylobacterium radiotolerans (strain ATCC 27329 / DSM 1819 / JCM 2831 / NBRC 15690 / NCIMB 10815 / 0-1) protein is Large ribosomal subunit protein uL23.